The following is a 455-amino-acid chain: Phosphoglucosamine mutase (455 aa).

Serine 104 acts as the Phosphoserine intermediate in catalysis. Mg(2+) contacts are provided by serine 104, aspartate 253, aspartate 255, and aspartate 257. At serine 104 the chain carries Phosphoserine.

This sequence belongs to the phosphohexose mutase family. Mg(2+) serves as cofactor. Post-translationally, activated by phosphorylation.

The enzyme catalyses alpha-D-glucosamine 1-phosphate = D-glucosamine 6-phosphate. Its function is as follows. Catalyzes the conversion of glucosamine-6-phosphate to glucosamine-1-phosphate. The protein is Phosphoglucosamine mutase of Psychrobacter cryohalolentis (strain ATCC BAA-1226 / DSM 17306 / VKM B-2378 / K5).